The following is a 280-amino-acid chain: 4-diphosphocytidyl-2-C-methyl-D-erythritol kinase (280 aa).

The active site involves lysine 11. 95-105 (PVAAGLGGGSS) contributes to the ATP binding site. Aspartate 137 is an active-site residue.

It belongs to the GHMP kinase family. IspE subfamily.

The enzyme catalyses 4-CDP-2-C-methyl-D-erythritol + ATP = 4-CDP-2-C-methyl-D-erythritol 2-phosphate + ADP + H(+). It functions in the pathway isoprenoid biosynthesis; isopentenyl diphosphate biosynthesis via DXP pathway; isopentenyl diphosphate from 1-deoxy-D-xylulose 5-phosphate: step 3/6. Catalyzes the phosphorylation of the position 2 hydroxy group of 4-diphosphocytidyl-2C-methyl-D-erythritol. In Pelobacter propionicus (strain DSM 2379 / NBRC 103807 / OttBd1), this protein is 4-diphosphocytidyl-2-C-methyl-D-erythritol kinase.